The primary structure comprises 223 residues: Mating-type protein ALPHA2 (223 aa).

The segment at residues 151-213 is a DNA-binding region (homeobox; TALE-type); that stretch reads EFKKGKRFLK…NRRRKDKITE (63 aa).

It belongs to the TALE/M-ATYP homeobox family. In terms of assembly, forms a heterodimer with A1.

The protein localises to the nucleus. In terms of biological role, mating type proteins are sequence specific DNA-binding proteins that act as master switches in yeast differentiation by controlling gene expression in a cell type-specific fashion. Transcriptional corepressor that acts in conjunction with A1 to repress transcription of haploid-specific genes. The protein is Mating-type protein ALPHA2 (HMLALPHA2) of Kluyveromyces lactis (strain ATCC 8585 / CBS 2359 / DSM 70799 / NBRC 1267 / NRRL Y-1140 / WM37) (Yeast).